The following is a 428-amino-acid chain: Mitochondrial import inner membrane translocase subunit TIM50-C (428 aa).

Residues 59-79 (LFTCTALPAAAPALFSILHTA) form a helical membrane-spanning segment. The Mitochondrial intermembrane portion of the chain corresponds to 80 to 428 (RGYSSTTKQE…KQWSRNILGR (349 aa)). The disordered stretch occupies residues 112-138 (FPQTSPEVDSNAEQERKKREEEEEKEN). The span at 124–138 (EQERKKREEEEEKEN) shows a compositional bias: basic and acidic residues. Positions 224–367 (YVQPRYTLVL…LDLIAFLKII (144 aa)) constitute an FCP1 homology domain.

This sequence belongs to the TIM50 family. As to quaternary structure, component of the TIM23 complex at least composed of Tim23, Tim17 (Tim17a1, Tim17a2 or Tim17b1) and a Tim50.

Its subcellular location is the mitochondrion inner membrane. Essential component of the TIM23 complex, a complex that mediates the translocation of transit peptide-containing proteins across the mitochondrial inner membrane. The polypeptide is Mitochondrial import inner membrane translocase subunit TIM50-C (ttm50) (Drosophila melanogaster (Fruit fly)).